Reading from the N-terminus, the 262-residue chain is Sugar fermentation stimulation protein homolog (262 aa).

It belongs to the SfsA family.

This chain is Sugar fermentation stimulation protein homolog, found in Lawsonia intracellularis (strain PHE/MN1-00).